We begin with the raw amino-acid sequence, 501 residues long: Glycerol kinase (501 aa).

Residue threonine 12 participates in ADP binding. Residues threonine 12, threonine 13, and serine 14 each contribute to the ATP site. Threonine 12 serves as a coordination point for sn-glycerol 3-phosphate. Arginine 16 provides a ligand contact to ADP. Positions 82, 83, 134, and 244 each coordinate sn-glycerol 3-phosphate. Glycerol-binding residues include arginine 82, glutamate 83, tyrosine 134, aspartate 244, and glutamine 245. ADP-binding residues include threonine 266 and glycine 310. ATP contacts are provided by threonine 266, glycine 310, glutamine 314, and glycine 411. The ADP site is built by glycine 411 and asparagine 415.

Belongs to the FGGY kinase family.

It catalyses the reaction glycerol + ATP = sn-glycerol 3-phosphate + ADP + H(+). It participates in polyol metabolism; glycerol degradation via glycerol kinase pathway; sn-glycerol 3-phosphate from glycerol: step 1/1. Its activity is regulated as follows. Inhibited by fructose 1,6-bisphosphate (FBP). Key enzyme in the regulation of glycerol uptake and metabolism. Catalyzes the phosphorylation of glycerol to yield sn-glycerol 3-phosphate. The sequence is that of Glycerol kinase from Methylobacterium radiotolerans (strain ATCC 27329 / DSM 1819 / JCM 2831 / NBRC 15690 / NCIMB 10815 / 0-1).